A 354-amino-acid chain; its full sequence is Cysteine and histidine-rich domain-containing protein morgana (354 aa).

Zn(2+) contacts are provided by Cys4, Cys9, Cys23, His26, Cys41, Cys42, Cys58, His63, Cys140, Cys145, Cys159, His162, Cys177, Cys178, Cys194, and His199. CHORD domains are found at residues 4–63 (CYNR…LAKH) and 140–199 (CKNN…YGEH). The CS domain maps to 210–301 (VVQCRYDWHQ…LEPGSWSNLN (92 aa)). 2 positions are modified to phosphoserine: Ser324 and Ser339.

In terms of assembly, interacts with Hsp83.

The protein localises to the cytoplasm. It is found in the nucleus. Its subcellular location is the cytoskeleton. It localises to the spindle. Its function is as follows. Regulates centrosome duplication and mitotic spindle dynamics. Also involved in controlling the size of dendritic arbors. May act as co-chaperone for Hsp83. During mitotic spindle assembly, regulates microtubule (MT) dynamics by binding to MTs and promoting MT polymerisation. Promotes the elongation and retraction of terminal branches in response to changes in body size, possibly acting downstream of the TORC2 pathway to enable proportional scaling of dendritic arbors. The polypeptide is Cysteine and histidine-rich domain-containing protein morgana (Drosophila melanogaster (Fruit fly)).